The primary structure comprises 858 residues: MAFPAPAFSLANLLNGTYGVDTPEEVERVRSEQREEAAAACRNYKPLPAVDVGASVTEDAHSLRTPDGAPSEEVSVEFVTYGAEDYLEKSDDELFVAFETMVKPMCIGQLWCPAFNKCSFISSIAMARALLLVPNTPNRTMKCFEDLVAAIYTKSDFYYDDECEADDVQINISSRDVPGYSFEPWSRTSGFEPPPICEACNMIMYQCPCFDFNALKKSCAERTFADDYVIEGLDGVVDNATLLSNLGPFLVPVKCQYKQYPTPTVAIPPSLNRATDRVDINLVQSICDSTLPTHSNYDDSFHQVFVESADYSIDLDHVRLRQSDLIAKIPDSGHMIPVLNTGSGHKRVGTTKEVLTAIKKRNADVPELGDSVNLPRLSKAVAERFFIAYINGNSLATSNFVNVVSNFHDYMEKWKSSGLSYDDLPDLHAENLQFYDHMIKSDVKPVVSDTLNIDRPVPATITYHKKGITSQFSPLFTALFERFQRCLRERVILPVGKISSLEMSGFDVKNKYCLEIDLSKFDKSQGEFHLMIQEHILNGLGCPAPITKWWCDFHRFSYIRDRRAGVGMPISFQRRTGDAFTYFGNTIVTMAEFAWCYDTDQFEKLLFPGDDSLGFSVLPPVGDPSKFTTLFNMEAKVMEPAVPYICSKFLLSDEFGNTFSVPDPLREVQRLGTKKIPYSDNDEFLFAHFMSFVDRLKFLDRMTQSCIDQLSLFFELKYRKSGAEAALMLGAFKKYTANFQSYKELYYSDRRQCELINSFSCVELRIERSSFIKQRKKKDGIERRRNDKRRTPTSPHGGGEETETKVSQEESTGTMLQKSQRESAFKSQTIPFPTVLSSRRFGIDRDVPPRECGGIVRV.

A RdRp catalytic domain is found at 511-624 (KYCLEIDLSK…FSVLPPVGDP (114 aa)). The interval 775–830 (RKKKDGIERRRNDKRRTPTSPHGGGEETETKVSQEESTGTMLQKSQRESAFKSQTI) is disordered. The span at 798-808 (GGEETETKVSQ) shows a compositional bias: basic and acidic residues. Residues 809 to 818 (EESTGTMLQK) show a composition bias toward polar residues.

This sequence belongs to the ssRNA positive-strand viruses RNA-directed RNA polymerase family. Interacts with replication protein 1a.

The enzyme catalyses RNA(n) + a ribonucleoside 5'-triphosphate = RNA(n+1) + diphosphate. In terms of biological role, RNA-dependent RNA polymerase which replicates the viral genome composed of 3 RNA segments, RNA1, RNA2 and RNA3. The chain is RNA-directed RNA polymerase 2a from Cucumber mosaic virus (strain Ixora) (CMV).